A 206-amino-acid polypeptide reads, in one-letter code: 2-phospho-L-lactate guanylyltransferase (206 aa).

It belongs to the CofC family. Homodimer.

The catalysed reaction is (2S)-2-phospholactate + GTP + H(+) = (2S)-lactyl-2-diphospho-5'-guanosine + diphosphate. Its pathway is cofactor biosynthesis; coenzyme F420 biosynthesis. In terms of biological role, guanylyltransferase that catalyzes the activation of (2S)-2-phospholactate (2-PL) as (2S)-lactyl-2-diphospho-5'-guanosine, via the condensation of 2-PL with GTP. It is involved in the biosynthesis of coenzyme F420, a hydride carrier cofactor. The sequence is that of 2-phospho-L-lactate guanylyltransferase from Archaeoglobus profundus (strain DSM 5631 / JCM 9629 / NBRC 100127 / Av18).